Here is a 77-residue protein sequence, read N- to C-terminus: Small ribosomal subunit protein bS20 (77 aa).

The protein belongs to the bacterial ribosomal protein bS20 family.

Functionally, binds directly to 16S ribosomal RNA. The polypeptide is Small ribosomal subunit protein bS20 (Lactococcus lactis subsp. lactis (strain IL1403) (Streptococcus lactis)).